The chain runs to 66 residues: Photosystem II reaction center protein H (66 aa).

Residues 29-49 (PIMGLTMVLFLVFLLIILQIY) traverse the membrane as a helical segment.

This sequence belongs to the PsbH family. PSII is composed of 1 copy each of membrane proteins PsbA, PsbB, PsbC, PsbD, PsbE, PsbF, PsbH, PsbI, PsbJ, PsbK, PsbL, PsbM, PsbT, PsbX, PsbY, PsbZ, Psb30/Ycf12, at least 3 peripheral proteins of the oxygen-evolving complex and a large number of cofactors. It forms dimeric complexes.

The protein localises to the plastid. The protein resides in the chloroplast thylakoid membrane. Functionally, one of the components of the core complex of photosystem II (PSII), required for its stability and/or assembly. PSII is a light-driven water:plastoquinone oxidoreductase that uses light energy to abstract electrons from H(2)O, generating O(2) and a proton gradient subsequently used for ATP formation. It consists of a core antenna complex that captures photons, and an electron transfer chain that converts photonic excitation into a charge separation. This is Photosystem II reaction center protein H from Thalassiosira pseudonana (Marine diatom).